The chain runs to 258 residues: 6-carboxyhexanoate--CoA ligase (258 aa).

It belongs to the BioW family. In terms of assembly, homodimer. Requires Mg(2+) as cofactor.

It carries out the reaction heptanedioate + ATP + CoA = 6-carboxyhexanoyl-CoA + AMP + diphosphate. Its pathway is metabolic intermediate metabolism; pimeloyl-CoA biosynthesis; pimeloyl-CoA from pimelate: step 1/1. Functionally, catalyzes the transformation of pimelate into pimeloyl-CoA with concomitant hydrolysis of ATP to AMP. This chain is 6-carboxyhexanoate--CoA ligase, found in Bacillus atrophaeus (strain 1942).